The chain runs to 346 residues: Cytidine deaminase 5 (346 aa).

CMP/dCMP-type deaminase domains are found at residues 20-148 and 183-304; these read TDHK…FGSE and DLCS…ITGA. Position 58–60 (58–60) interacts with substrate; sequence NVE. Zn(2+) is bound at residue His71. The Proton donor role is filled by Glu73. Residues Cys104 and Cys107 each coordinate Zn(2+).

The protein belongs to the cytidine and deoxycytidylate deaminase family. As to quaternary structure, homodimer. Requires Zn(2+) as cofactor.

The enzyme catalyses cytidine + H2O + H(+) = uridine + NH4(+). It catalyses the reaction 2'-deoxycytidine + H2O + H(+) = 2'-deoxyuridine + NH4(+). This enzyme scavenges exogenous and endogenous cytidine and 2'-deoxycytidine for UMP synthesis. In Arabidopsis thaliana (Mouse-ear cress), this protein is Cytidine deaminase 5 (CDA5).